Consider the following 356-residue polypeptide: sn-glycerol-3-phosphate import ATP-binding protein UgpC (356 aa).

An ABC transporter domain is found at 4–235; it reads LKLQAVTKSW…PASLFVASFI (232 aa). An ATP-binding site is contributed by 37–44; the sequence is GPSGCGKS.

It belongs to the ABC transporter superfamily. sn-glycerol-3-phosphate importer (TC 3.A.1.1.3) family. As to quaternary structure, the complex is composed of two ATP-binding proteins (UgpC), two transmembrane proteins (UgpA and UgpE) and a solute-binding protein (UgpB).

The protein resides in the cell inner membrane. The enzyme catalyses sn-glycerol 3-phosphate(out) + ATP + H2O = sn-glycerol 3-phosphate(in) + ADP + phosphate + H(+). Its function is as follows. Part of the ABC transporter complex UgpBAEC involved in sn-glycerol-3-phosphate (G3P) import. Responsible for energy coupling to the transport system. The chain is sn-glycerol-3-phosphate import ATP-binding protein UgpC from Shigella boydii serotype 4 (strain Sb227).